The following is a 117-amino-acid chain: Large ribosomal subunit protein uL18 (117 aa).

The protein belongs to the universal ribosomal protein uL18 family. In terms of assembly, part of the 50S ribosomal subunit; part of the 5S rRNA/L5/L18/L25 subcomplex. Contacts the 5S and 23S rRNAs.

This is one of the proteins that bind and probably mediate the attachment of the 5S RNA into the large ribosomal subunit, where it forms part of the central protuberance. The sequence is that of Large ribosomal subunit protein uL18 from Francisella tularensis subsp. novicida (strain U112).